A 585-amino-acid polypeptide reads, in one-letter code: Aspartate--tRNA ligase (585 aa).

Glu-169 contributes to the L-aspartate binding site. Residues 193 to 196 (QLFK) form an aspartate region. Position 215 (Arg-215) interacts with L-aspartate. ATP contacts are provided by residues 215 to 217 (RDE) and Gln-224. Residue His-443 coordinates L-aspartate. Position 478 (Glu-478) interacts with ATP. An L-aspartate-binding site is contributed by Arg-485. 530–533 (GLDR) is an ATP binding site.

Belongs to the class-II aminoacyl-tRNA synthetase family. Type 1 subfamily. As to quaternary structure, homodimer.

The protein localises to the cytoplasm. It catalyses the reaction tRNA(Asp) + L-aspartate + ATP = L-aspartyl-tRNA(Asp) + AMP + diphosphate. In terms of biological role, catalyzes the attachment of L-aspartate to tRNA(Asp) in a two-step reaction: L-aspartate is first activated by ATP to form Asp-AMP and then transferred to the acceptor end of tRNA(Asp). This is Aspartate--tRNA ligase from Pseudothermotoga lettingae (strain ATCC BAA-301 / DSM 14385 / NBRC 107922 / TMO) (Thermotoga lettingae).